The following is a 194-amino-acid chain: Phosphoheptose isomerase (194 aa).

The SIS domain occupies 31–186 (ICQRFQAGNK…CEQVESRLFA (156 aa)). 46 to 48 (NGG) is a substrate binding site. Residues H55 and E59 each coordinate Zn(2+). Substrate contacts are provided by residues E59, 88 to 89 (ND), 114 to 116 (STS), S119, and Q166. Residues Q166 and H174 each coordinate Zn(2+).

The protein belongs to the SIS family. GmhA subfamily. Zn(2+) serves as cofactor.

It localises to the cytoplasm. The enzyme catalyses 2 D-sedoheptulose 7-phosphate = D-glycero-alpha-D-manno-heptose 7-phosphate + D-glycero-beta-D-manno-heptose 7-phosphate. Its pathway is carbohydrate biosynthesis; D-glycero-D-manno-heptose 7-phosphate biosynthesis; D-glycero-alpha-D-manno-heptose 7-phosphate and D-glycero-beta-D-manno-heptose 7-phosphate from sedoheptulose 7-phosphate: step 1/1. Its function is as follows. Catalyzes the isomerization of sedoheptulose 7-phosphate in D-glycero-D-manno-heptose 7-phosphate. The polypeptide is Phosphoheptose isomerase (Synechocystis sp. (strain ATCC 27184 / PCC 6803 / Kazusa)).